The chain runs to 145 residues: Protein SprT-like (145 aa).

One can recognise a SprT-like domain in the interval 5–141; sequence NYVKQVSVED…CGRCMGKLRL (137 aa). Histidine 64 contributes to the Zn(2+) binding site. Residue glutamate 65 is part of the active site. Residue histidine 68 participates in Zn(2+) binding.

This sequence belongs to the SprT family. Zn(2+) is required as a cofactor.

It is found in the cytoplasm. The protein is Protein SprT-like of Streptococcus sanguinis (strain SK36).